A 407-amino-acid polypeptide reads, in one-letter code: Cysteine desulfurase (407 aa).

The residue at position 226 (Lys226) is an N6-(pyridoxal phosphate)lysine. Cys364 functions as the Cysteine persulfide intermediate in the catalytic mechanism.

The protein belongs to the class-V pyridoxal-phosphate-dependent aminotransferase family. Csd subfamily. As to quaternary structure, homodimer. Interacts with SufE and the SufBCD complex composed of SufB, SufC and SufD. The interaction with SufE is required to mediate the direct transfer of the sulfur atom from the S-sulfanylcysteine. Pyridoxal 5'-phosphate serves as cofactor.

Its subcellular location is the cytoplasm. It catalyses the reaction (sulfur carrier)-H + L-cysteine = (sulfur carrier)-SH + L-alanine. The catalysed reaction is L-selenocysteine + AH2 = hydrogenselenide + L-alanine + A + H(+). It functions in the pathway cofactor biosynthesis; iron-sulfur cluster biosynthesis. Its function is as follows. Cysteine desulfurases mobilize the sulfur from L-cysteine to yield L-alanine, an essential step in sulfur metabolism for biosynthesis of a variety of sulfur-containing biomolecules. Component of the suf operon, which is activated and required under specific conditions such as oxidative stress and iron limitation. Acts as a potent selenocysteine lyase in vitro, that mobilizes selenium from L-selenocysteine. Selenocysteine lyase activity is however unsure in vivo. This is Cysteine desulfurase from Pectobacterium carotovorum subsp. carotovorum (strain PC1).